The primary structure comprises 434 residues: [Arg8]-vasotocin receptor (434 aa).

The Extracellular portion of the chain corresponds to 1–27 (MGRIANQTTASNDTDPFGRNEEVAKME). N-linked (GlcNAc...) asparagine glycans are attached at residues asparagine 6 and asparagine 12. The helical transmembrane segment at 28-48 (ITVLSVTFFVAVIGNLSVLLA) threads the bilayer. Residues 49–67 (MHNTKKKSSRMHLFIKHLS) are Cytoplasmic-facing. A helical membrane pass occupies residues 68–88 (LADMVVAFFQVLPQLCWEITF). The Extracellular segment spans residues 89–98 (RFYGPDFLCR). Cysteines 97 and 176 form a disulfide. Residues 99–119 (IVKHLQVLGMFASTYMMVMMT) traverse the membrane as a helical segment. At 120–141 (LDRYIAICHPLKTLQQPTQRAY) the chain is on the cytoplasmic side. A helical transmembrane segment spans residues 142-162 (IMIGSTWLCSLLLSTPQYFIF). Residues 163–191 (SLSEIQNGSYVYDCWGHFIEPWGIRAYIT) lie on the Extracellular side of the membrane. A helical transmembrane segment spans residues 192–212 (WITVGIFLIPVIILMICYGFI). Residues 213 to 257 (CHSIWKNIKCKTMRGTRNTKDGMIGKVSVSSVTIISRAKLRTVKM) are Cytoplasmic-facing. The chain crosses the membrane as a helical span at residues 258 to 278 (TLVIVLAYIVCWAPFFIVQMW). Residues 279 to 295 (SVWDENFSWDDSENAAV) are Extracellular-facing. A helical transmembrane segment spans residues 296-316 (TLSALLASLNSCCNPWIYMLF). The Cytoplasmic portion of the chain corresponds to 317 to 434 (SGHLLYDFLR…KSSQCMSKES (118 aa)).

The protein belongs to the G-protein coupled receptor 1 family. Vasopressin/oxytocin receptor subfamily. Expressed in pituitary, liver, gills, swim bladder and lateral line.

It is found in the cell membrane. Binds to vasotocin. Produces an induction of membrane chloride currents indicating that it is coupled to the inositol phosphate/calcium pathway. This Catostomus commersonii (White sucker) protein is [Arg8]-vasotocin receptor.